Here is a 199-residue protein sequence, read N- to C-terminus: Pyridoxal 5'-phosphate synthase subunit PdxT (199 aa).

Residue 52-54 (GES) coordinates L-glutamine. C84 serves as the catalytic Nucleophile. L-glutamine contacts are provided by residues R115 and 143 to 144 (IR). Catalysis depends on charge relay system residues H179 and E181.

Belongs to the glutaminase PdxT/SNO family. As to quaternary structure, in the presence of PdxS, forms a dodecamer of heterodimers. Only shows activity in the heterodimer.

The enzyme catalyses aldehydo-D-ribose 5-phosphate + D-glyceraldehyde 3-phosphate + L-glutamine = pyridoxal 5'-phosphate + L-glutamate + phosphate + 3 H2O + H(+). It catalyses the reaction L-glutamine + H2O = L-glutamate + NH4(+). It functions in the pathway cofactor biosynthesis; pyridoxal 5'-phosphate biosynthesis. Functionally, catalyzes the hydrolysis of glutamine to glutamate and ammonia as part of the biosynthesis of pyridoxal 5'-phosphate. The resulting ammonia molecule is channeled to the active site of PdxS. The protein is Pyridoxal 5'-phosphate synthase subunit PdxT of Methanosarcina mazei (strain ATCC BAA-159 / DSM 3647 / Goe1 / Go1 / JCM 11833 / OCM 88) (Methanosarcina frisia).